A 150-amino-acid polypeptide reads, in one-letter code: Large ribosomal subunit protein uL13 (150 aa).

The disordered stretch occupies residues 129–150 (PEHPHSAQRPQTLQLNPAASSQ). The span at 136 to 150 (QRPQTLQLNPAASSQ) shows a compositional bias: polar residues.

This sequence belongs to the universal ribosomal protein uL13 family. As to quaternary structure, part of the 50S ribosomal subunit.

In terms of biological role, this protein is one of the early assembly proteins of the 50S ribosomal subunit, although it is not seen to bind rRNA by itself. It is important during the early stages of 50S assembly. This Prochlorococcus marinus (strain MIT 9303) protein is Large ribosomal subunit protein uL13.